Here is a 2207-residue protein sequence, read N- to C-terminus: DNA polymerase epsilon catalytic subunit A (2207 aa).

Disordered regions lie at residues 1-20, 1201-1233, and 1934-1961; these read MPSRKPSKYGNKFRSGAASF, SMEKLKSSSPQKASGKRKHPENQTKTSLDPFAS, and RPESDDSSTPRLTQIPIGQPEPGQENEE. The Zn(2+) site is built by Cys-2075, Cys-2078, Cys-2113, and Cys-2116. The segment at 2075–2116 adopts a CysA-type zinc-finger fold; it reads CSACCLIRDLDLCRDEDVLPERGSGSGPDSATSSRPWCCPFC. Residues Cys-2147, Cys-2150, Cys-2162, and Cys-2164 each contribute to the [4Fe-4S] cluster site. Residues 2147 to 2164 carry the CysB motif motif; sequence CSKCGTLKISEFMEHCSC.

This sequence belongs to the DNA polymerase type-B family. In terms of assembly, heterotetramer. Consists of 4 subunits: pol2, dpb2, dpb3 and dpb4. The cofactor is [4Fe-4S] cluster.

The protein localises to the nucleus. The enzyme catalyses DNA(n) + a 2'-deoxyribonucleoside 5'-triphosphate = DNA(n+1) + diphosphate. DNA polymerase II participates in chromosomal DNA replication. This is DNA polymerase epsilon catalytic subunit A (pol2) from Emericella nidulans (strain FGSC A4 / ATCC 38163 / CBS 112.46 / NRRL 194 / M139) (Aspergillus nidulans).